A 192-amino-acid polypeptide reads, in one-letter code: Protein GrpE (192 aa).

The span at 1-20 (MEERNEQVVEEVKEEVKEAQ) shows a compositional bias: basic and acidic residues. Positions 1-39 (MEERNEQVVEEVKEEVKEAQVEEAVTSEDSEESVEEKSE) are disordered. Over residues 25-34 (VTSEDSEESV) the composition is skewed to acidic residues.

The protein belongs to the GrpE family. As to quaternary structure, homodimer.

It localises to the cytoplasm. In terms of biological role, participates actively in the response to hyperosmotic and heat shock by preventing the aggregation of stress-denatured proteins, in association with DnaK and GrpE. It is the nucleotide exchange factor for DnaK and may function as a thermosensor. Unfolded proteins bind initially to DnaJ; upon interaction with the DnaJ-bound protein, DnaK hydrolyzes its bound ATP, resulting in the formation of a stable complex. GrpE releases ADP from DnaK; ATP binding to DnaK triggers the release of the substrate protein, thus completing the reaction cycle. Several rounds of ATP-dependent interactions between DnaJ, DnaK and GrpE are required for fully efficient folding. The protein is Protein GrpE of Bacillus cereus (strain ATCC 10987 / NRS 248).